A 145-amino-acid chain; its full sequence is Large ribosomal subunit protein uL11 (145 aa).

Belongs to the universal ribosomal protein uL11 family. In terms of assembly, part of the ribosomal stalk of the 50S ribosomal subunit. Interacts with L10 and the large rRNA to form the base of the stalk. L10 forms an elongated spine to which L12 dimers bind in a sequential fashion forming a multimeric L10(L12)X complex. Post-translationally, one or more lysine residues are methylated.

In terms of biological role, forms part of the ribosomal stalk which helps the ribosome interact with GTP-bound translation factors. This is Large ribosomal subunit protein uL11 from Rickettsia massiliae (strain Mtu5).